The primary structure comprises 168 residues: Ribosome maturation factor RimM (168 aa).

Residues 93–167 (ENEFYQSDLV…YITLNMPEFI (75 aa)) enclose the PRC barrel domain.

Belongs to the RimM family. Binds ribosomal protein uS19.

The protein resides in the cytoplasm. Its function is as follows. An accessory protein needed during the final step in the assembly of 30S ribosomal subunit, possibly for assembly of the head region. Essential for efficient processing of 16S rRNA. May be needed both before and after RbfA during the maturation of 16S rRNA. It has affinity for free ribosomal 30S subunits but not for 70S ribosomes. The chain is Ribosome maturation factor RimM from Wolbachia sp. subsp. Brugia malayi (strain TRS).